The following is a 329-amino-acid chain: Probable carboxylesterase 13 (329 aa).

An N-acetylmethionine modification is found at methionine 1. Residues 81–83 carry the Involved in the stabilization of the negatively charged intermediate by the formation of the oxyanion hole motif; that stretch reads HGG. Residues serine 165, aspartate 269, and histidine 302 contribute to the active site.

Belongs to the 'GDXG' lipolytic enzyme family. As to expression, expressed in flowers.

The enzyme catalyses a carboxylic ester + H2O = an alcohol + a carboxylate + H(+). Its function is as follows. Carboxylesterase acting on esters with varying acyl chain length. The polypeptide is Probable carboxylesterase 13 (CXE13) (Arabidopsis thaliana (Mouse-ear cress)).